The chain runs to 395 residues: ATP phosphoribosyltransferase regulatory subunit (395 aa).

This sequence belongs to the class-II aminoacyl-tRNA synthetase family. HisZ subfamily. In terms of assembly, heteromultimer composed of HisG and HisZ subunits.

The protein resides in the cytoplasm. Its pathway is amino-acid biosynthesis; L-histidine biosynthesis; L-histidine from 5-phospho-alpha-D-ribose 1-diphosphate: step 1/9. In terms of biological role, required for the first step of histidine biosynthesis. May allow the feedback regulation of ATP phosphoribosyltransferase activity by histidine. In Stutzerimonas stutzeri (Pseudomonas stutzeri), this protein is ATP phosphoribosyltransferase regulatory subunit.